A 158-amino-acid chain; its full sequence is Transcription elongation factor GreA (158 aa).

This sequence belongs to the GreA/GreB family.

Necessary for efficient RNA polymerase transcription elongation past template-encoded arresting sites. The arresting sites in DNA have the property of trapping a certain fraction of elongating RNA polymerases that pass through, resulting in locked ternary complexes. Cleavage of the nascent transcript by cleavage factors such as GreA or GreB allows the resumption of elongation from the new 3'terminus. GreA releases sequences of 2 to 3 nucleotides. The protein is Transcription elongation factor GreA of Verminephrobacter eiseniae (strain EF01-2).